The following is an 846-amino-acid chain: MSTAAGSRKKHSKLHNEERADITKDEFEAIREALSKEEFRKLFFDYVEEVQDPENRKIYEQEITQLEKERGVDIKFVHPKPGFVVKTSIDGELKCFINIASSPEVARPNSEVGMNPETGGRGLSWSIPMAQTGGRDDCDAKNNHCKVFDVVFHPDALHLSTRDSQFRKALIDTALDAVEREYEVALDRANLKYPKLDYKGIARPTVIRKLAANPTPEEQEPHPLEHMYPTKPPASNSEPKILPMKTKAAPVPEFAVPKYSIKQSHDVDLSEYTDELDAKLHVTVPRSLVVEIELPLLRSTAECQLDVTAKSVYLLSERLGAKYRLKLDLPFVVDDKAGNARFDTEKRRLSITLPVVRKSVNQQRQMHDTLRYLSREDSGVELHSNSESPVEDDADGDMPETPELETAAPPDPPALTPSTFLKDSVHYQLPKFDCNALDNAMAFVLDVAHVQPDSIVTLKTDRSVSVKFATIGSGYYPTHYAFYMELPSVDMEEYHKDHCIESIEAEAWDNNVIMKLFLGAESKAPTSYLAGLHANGLKEYQVYGHYKAKTDKNNECEPNPPRVVQIMRTDDAVVITVRPPHTSITTEEDDEQQQQLHKKPSKKQRKRNKKQRSYSESACEEMLDQQDGPLGRKKDATTPMVPQRKQRSYSECNDSTIGSENVNRGILKRFSRYGPRPSMSDSCSSIDDCGFSSHSCSVDASSSLFSQSFNGIPEEDRTEEGLSESCKKTVRFNDQIMKQVFRHDSSILGQRKKNQKRRNCKLRAQQRRLSEGDSADYEETRDTALKQQGEPSGNKLHDSGLDLTGASASHRTDNNSKSYRTRQDHADADAKNDAMMFEMDDEDDEI.

Disordered stretches follow at residues 1–21, 372–416, 581–657, and 743–846; these read MSTAAGSRKKHSKLHNEERAD, YLSR…PALT, HTSI…DSTI, and HDSS…DDEI. Residue serine 378 is modified to Phosphoserine. Residues 389–403 are compositionally biased toward acidic residues; the sequence is PVEDDADGDMPETPE. Basic residues-rich tracts occupy residues 596–612 and 750–766; these read LHKKPSKKQRKRNKKQR and QRKKNQKRRNCKLRAQQ. Serine 770 carries the post-translational modification Phosphoserine. Residues 821–832 show a composition bias toward basic and acidic residues; sequence TRQDHADADAKN.

This sequence belongs to the PIH1 family. Kintoun subfamily. In terms of assembly, interacts with Pp1alpha-96A, Pp1-87B, Pp1-13C and flw.

Its subcellular location is the cytoplasm. Its function is as follows. Required for cytoplasmic pre-assembly of axonemal dyneins, thereby playing a central role in motility in cilia and flagella. Involved in pre-assembly of dynein arm complexes in the cytoplasm before intraflagellar transport loads them for the ciliary compartment. The sequence is that of Protein kintoun from Drosophila persimilis (Fruit fly).